The sequence spans 639 residues: CTTNBP2 N-terminal-like protein (639 aa).

Residues 87–285 (MKQCKNMQER…DLEASHQHSS (199 aa)) adopt a coiled-coil conformation. Phosphoserine is present on residues Ser284 and Ser285. 3 disordered regions span residues 387-430 (VENG…PCSS), 463-490 (RHKFQSQADQDQQASGLQSPPSRDLSPT), and 511-609 (RFTS…AASL). Low complexity-rich tracts occupy residues 407–430 (PSSGSSLSPSSTASSSLTSSPCSS) and 467–477 (QSQADQDQQAS). Residues Ser481, Ser488, Ser523, Ser527, Ser560, Ser563, and Ser568 each carry the phosphoserine modification. The span at 511 to 529 (RFTSQQGPIKPVSPNSSPF) shows a compositional bias: polar residues. Thr570 and Thr590 each carry phosphothreonine. Positions 587-600 (PGLTPSPSATTPLT) are enriched in low complexity. Position 592 is a phosphoserine (Ser592).

In terms of assembly, interacts with CTTN/cortactin; this interaction may redistribute CTTN to stress fibers. May form homomers. Associates with the core of STRIPAK complexes composed of PP2A catalytic and scaffolding subunits, the striatins (PP2A regulatory subunits), the striatin-associated proteins MOB4, STRIP1 and STRIP2, PDCD10 and members of the STE20 kinases, such as STK24 and STK26.

The protein resides in the cell projection. It is found in the lamellipodium. Its subcellular location is the cytoplasm. It localises to the cytoskeleton. The protein localises to the stress fiber. Regulates lamellipodial actin dynamics in a CTTN-dependent manner. Associates with core striatin-interacting phosphatase and kinase (STRIPAK) complex to form CTTNBP2NL-STRIPAK complexes. STRIPAK complexes have critical roles in protein (de)phosphorylation and are regulators of multiple signaling pathways including Hippo, MAPK, nuclear receptor and cytoskeleton remodeling. Different types of STRIPAK complexes are involved in a variety of biological processes such as cell growth, differentiation, apoptosis, metabolism and immune regulation. This Pongo abelii (Sumatran orangutan) protein is CTTNBP2 N-terminal-like protein (CTTNBP2NL).